The chain runs to 430 residues: FAD-dependent monooxygenase asL4 (430 aa).

FAD is bound by residues Gly11–Ala14, Glu33–Arg34, Arg108, and Tyr278.

Belongs to the aromatic-ring hydroxylase family. The cofactor is FAD.

It functions in the pathway secondary metabolite biosynthesis; terpenoid biosynthesis. Its function is as follows. Flavin-dependent monooxygenase; part of the gene cluster that mediates the biosynthesis of xenovulene A, an unusual meroterpenoid that has potent inhibitory effects on the human gamma-aminobutyrate A (GABAA) benzodiazepine receptor. The first step of xenovulene A biosynthesis is the biosynthesis of 3-methylorcinaldehyde performed by the non-reducing polyketide synthase aspks1. The salicylate hydroxylase asL1 then catalyzes the oxidative dearomatization of 3-methylorcinaldehyde to yield a dearomatized hydroxycyclohexadione. The 2-oxoglutarate-dependent dioxygenase asL3 further catalyzes the oxidative ring expansion to provide the first tropolone metabolite. The cytochrome P450 monooxygenase asR2 allows the synthesis of tropolone hemiacetal. In parallel, a previously unrecognised class of terpene cyclase, asR6, produces alpha-humulene from farnesylpyrophosphate (FPP). The putative Diels-Alderase asR5 probably catalyzes the formation of the tropolone-humulene skeleton by linking humulene and the polyketide moiety. Oxidative-ring contractions catalyzed by asL4 and asL6 then processively remove carbon atoms from the polyketide to yield xenovulene A. This is FAD-dependent monooxygenase asL4 from Sarocladium schorii (Acremonium strictum (strain IMI 501407)).